The primary structure comprises 531 residues: DnaJ homolog subfamily C member 21 (531 aa).

The J domain occupies 3–69; the sequence is CHYEALGVRR…QERAWYDNHR (67 aa). Disordered regions lie at residues 279-311, 327-474, and 502-531; these read FGDG…AELY, KAMK…VPAE, and KATG…RKNR. Over residues 281-311 the composition is skewed to acidic residues; the sequence is DGSDENEMEEHELKDEEDGKDSDEAEDAELY. Residues S283 and S302 each carry the phosphoserine modification. Residues 314-338 form a C2H2-type 1 zinc finger; sequence LYCPACDKSFKTEKAMKNHEKSKKH. A compositionally biased stretch (acidic residues) spans 364-375; sequence NPLDDNSEEEME. The residue at position 370 (S370) is a Phosphoserine. A compositionally biased stretch (basic residues) spans 381–392; sequence KLSKKQKKKKQK. A compositionally biased stretch (polar residues) spans 393–403; the sequence is PAQNYDDNFNV. Residues 442-453 are compositionally biased toward basic and acidic residues; sequence KPCDDPKSEAKS. Residues 455-464 show a composition bias toward basic residues; sequence PKPKGKKTKD. Residues 482–506 form a C2H2-type 2 zinc finger; sequence ISCTTCHSEFPSRNKLFDHLKATGH. S511 is modified (phosphoserine). The segment covering 511–522 has biased composition (low complexity); sequence SSSSLNSATSSQ.

Interacts with HSPA8, PA2G4 and ZNF622. In terms of tissue distribution, expressed in brain, placenta, kidney and pancreas.

It is found in the cytoplasm. The protein localises to the nucleus. The protein resides in the nucleolus. In terms of biological role, may act as a co-chaperone for HSP70. May play a role in ribosomal RNA (rRNA) biogenesis, possibly in the maturation of the 60S subunit. Binds the precursor 45S rRNA. The chain is DnaJ homolog subfamily C member 21 (DNAJC21) from Homo sapiens (Human).